Reading from the N-terminus, the 162-residue chain is MSKIISVGISEHKVASDPVVLVTYGLGSCVGIALYDPEVRIGGLAHTLLPAPVREVQGAERTAKFTCWAVDLMVEELLKCGCAPERLVAKLAGGATMFEPQYRSAHGGIGERNVAAAREALERSGIPLVAEDTGGDYGRSLEFNTATGIIMVRALQQPIKQL.

Belongs to the CheD family.

The enzyme catalyses L-glutaminyl-[protein] + H2O = L-glutamyl-[protein] + NH4(+). Probably deamidates glutamine residues to glutamate on methyl-accepting chemotaxis receptors (MCPs), playing an important role in chemotaxis. This chain is Probable chemoreceptor glutamine deamidase CheD 2, found in Geobacter metallireducens (strain ATCC 53774 / DSM 7210 / GS-15).